Reading from the N-terminus, the 331-residue chain is 6-phosphogluconolactonase (331 aa).

Residue Lys-287 is modified to N6-acetyllysine.

It belongs to the cycloisomerase 2 family.

It carries out the reaction 6-phospho-D-glucono-1,5-lactone + H2O = 6-phospho-D-gluconate + H(+). Its pathway is carbohydrate degradation; pentose phosphate pathway; D-ribulose 5-phosphate from D-glucose 6-phosphate (oxidative stage): step 2/3. In terms of biological role, catalyzes the hydrolysis of 6-phosphogluconolactone to 6-phosphogluconate. This chain is 6-phosphogluconolactonase, found in Escherichia coli O139:H28 (strain E24377A / ETEC).